A 394-amino-acid chain; its full sequence is Flavohemoprotein (394 aa).

Positions 1-138 constitute a Globin domain; it reads MLTQEHINII…LAQVFIDREG (138 aa). His85 is a heme b binding site. Active-site charge relay system residues include Tyr95 and Glu137. A reductase region spans residues 149 to 394; sequence GGWRDGRTFV…VFGPHAQLAA (246 aa). In terms of domain architecture, FAD-binding FR-type spans 152–262; it reads RDGRTFVVRE…YAPAGDFFYV (111 aa). FAD is bound by residues Tyr190 and 206-209; that span reads RQYS. An NADP(+)-binding site is contributed by 274 to 279; it reads GVGATP. 385–388 provides a ligand contact to FAD; that stretch reads VFGP.

It belongs to the globin family. Two-domain flavohemoproteins subfamily. The protein in the C-terminal section; belongs to the flavoprotein pyridine nucleotide cytochrome reductase family. Requires heme b as cofactor. The cofactor is FAD.

The catalysed reaction is 2 nitric oxide + NADPH + 2 O2 = 2 nitrate + NADP(+) + H(+). It carries out the reaction 2 nitric oxide + NADH + 2 O2 = 2 nitrate + NAD(+) + H(+). Functionally, is involved in NO detoxification in an aerobic process, termed nitric oxide dioxygenase (NOD) reaction that utilizes O(2) and NAD(P)H to convert NO to nitrate, which protects the bacterium from various noxious nitrogen compounds. Therefore, plays a central role in the inducible response to nitrosative stress. In Vibrio cholerae serotype O1 (strain ATCC 39315 / El Tor Inaba N16961), this protein is Flavohemoprotein (hmp).